Consider the following 273-residue polypeptide: Protein INAPERTURATE POLLEN1 (273 aa).

The region spanning 12 to 267 (SRRFNDFYED…KDQILLQDFE (256 aa)) is the DOG1 domain.

Expressed only in anthers and in pollen. Not detected in other flower tissues, stems, leaves and siliques.

The protein resides in the cytoplasm. Required for the formation of pollen surface apertures, which arise by restriction of exine deposition at specific sites. The aperture length depends on the INP1 dosage. Does not play a role in specifying the number or position of apertures. Acts in a sporophytic manner. The sequence is that of Protein INAPERTURATE POLLEN1 from Arabidopsis thaliana (Mouse-ear cress).